Here is a 515-residue protein sequence, read N- to C-terminus: Meiotically up-regulated gene 68 protein (515 aa).

The interval 165-204 (LHSIESERNESSLSLDSGESEKKSEEDNGNGEQNYIPEQY) is disordered.

Its function is as follows. Has a role in meiosis. The protein is Meiotically up-regulated gene 68 protein (mug68) of Schizosaccharomyces pombe (strain 972 / ATCC 24843) (Fission yeast).